Reading from the N-terminus, the 77-residue chain is U14-theraphotoxin-Cg1b (77 aa).

The signal sequence occupies residues 1-21 (MKTSVLLVILGIAAITVQCTA). The propeptide occupies 22–49 (SESVEQDSLRTFVDAVLGWNAEMASEAR). 3 disulfide bridges follow: C50/C64, C57/C69, and C63/C75.

It belongs to the neurotoxin 10 (Hwtx-1) family. 65 (Jztx-21) subfamily. In terms of tissue distribution, expressed by the venom gland.

The protein localises to the secreted. Its function is as follows. Probable ion channel inhibitor. This chain is U14-theraphotoxin-Cg1b, found in Chilobrachys guangxiensis (Chinese earth tiger tarantula).